The sequence spans 303 residues: Glycine--tRNA ligase alpha subunit (303 aa).

Belongs to the class-II aminoacyl-tRNA synthetase family. As to quaternary structure, tetramer of two alpha and two beta subunits.

It localises to the cytoplasm. The catalysed reaction is tRNA(Gly) + glycine + ATP = glycyl-tRNA(Gly) + AMP + diphosphate. The polypeptide is Glycine--tRNA ligase alpha subunit (Salmonella arizonae (strain ATCC BAA-731 / CDC346-86 / RSK2980)).